Consider the following 258-residue polypeptide: Phosphate import ATP-binding protein PstB (258 aa).

The region spanning 5 to 247 (LDLKGVNIYY…EKIFSNPTEK (243 aa)) is the ABC transporter domain. 37 to 44 (GASGCGKT) is a binding site for ATP.

It belongs to the ABC transporter superfamily. Phosphate importer (TC 3.A.1.7) family. In terms of assembly, the complex is composed of two ATP-binding proteins (PstB), two transmembrane proteins (PstC and PstA) and a solute-binding protein (PstS).

Its subcellular location is the cell membrane. The catalysed reaction is phosphate(out) + ATP + H2O = ADP + 2 phosphate(in) + H(+). Functionally, part of the ABC transporter complex PstSACB involved in phosphate import. Responsible for energy coupling to the transport system. The protein is Phosphate import ATP-binding protein PstB of Mycobacterium leprae (strain TN).